Reading from the N-terminus, the 569-residue chain is Dihydroxy-acid dehydratase (569 aa).

Cys-61 is a binding site for [2Fe-2S] cluster. Asp-93 is a binding site for Mg(2+). Cys-134 is a binding site for [2Fe-2S] cluster. The Mg(2+) site is built by Asp-135 and Lys-136. Lys-136 bears the N6-carboxylysine mark. Residue Cys-211 participates in [2Fe-2S] cluster binding. Glu-462 is a Mg(2+) binding site. Ser-488 (proton acceptor) is an active-site residue.

It belongs to the IlvD/Edd family. Homodimer. The cofactor is [2Fe-2S] cluster. Mg(2+) serves as cofactor.

It carries out the reaction (2R)-2,3-dihydroxy-3-methylbutanoate = 3-methyl-2-oxobutanoate + H2O. It catalyses the reaction (2R,3R)-2,3-dihydroxy-3-methylpentanoate = (S)-3-methyl-2-oxopentanoate + H2O. Its pathway is amino-acid biosynthesis; L-isoleucine biosynthesis; L-isoleucine from 2-oxobutanoate: step 3/4. It participates in amino-acid biosynthesis; L-valine biosynthesis; L-valine from pyruvate: step 3/4. Functionally, functions in the biosynthesis of branched-chain amino acids. Catalyzes the dehydration of (2R,3R)-2,3-dihydroxy-3-methylpentanoate (2,3-dihydroxy-3-methylvalerate) into 2-oxo-3-methylpentanoate (2-oxo-3-methylvalerate) and of (2R)-2,3-dihydroxy-3-methylbutanoate (2,3-dihydroxyisovalerate) into 2-oxo-3-methylbutanoate (2-oxoisovalerate), the penultimate precursor to L-isoleucine and L-valine, respectively. The protein is Dihydroxy-acid dehydratase of Tropheryma whipplei (strain Twist) (Whipple's bacillus).